The following is a 153-amino-acid chain: Histone H2B.4 (153 aa).

Composition is skewed to basic and acidic residues over residues methionine 1–proline 28 and glutamate 36–lysine 53. A disordered region spans residues methionine 1 to lysine 61. N6-acetyllysine is present on residues lysine 7 and lysine 37. Lysine 149 participates in a covalent cross-link: Glycyl lysine isopeptide (Lys-Gly) (interchain with G-Cter in ubiquitin).

Belongs to the histone H2B family. In terms of assembly, the nucleosome is a histone octamer containing two molecules each of H2A, H2B, H3 and H4 assembled in one H3-H4 heterotetramer and two H2A-H2B heterodimers. The octamer wraps approximately 147 bp of DNA. Can be acetylated to form H2BK6ac and H2BK33ac. In terms of processing, monoubiquitinated by BRE1 to form H2BK143ub1 and deubiquitinated by UBP26. Required for heterochromatic histone H3 di- and trimethylation at H3K4me. May give a specific tag for epigenetic transcriptional activation.

The protein resides in the nucleus. It is found in the chromosome. Functionally, core component of nucleosome. Nucleosomes wrap and compact DNA into chromatin, limiting DNA accessibility to the cellular machineries which require DNA as a template. Histones thereby play a central role in transcription regulation, DNA repair, DNA replication and chromosomal stability. DNA accessibility is regulated via a complex set of post-translational modifications of histones, also called histone code, and nucleosome remodeling. The polypeptide is Histone H2B.4 (H2B.4) (Oryza sativa subsp. indica (Rice)).